We begin with the raw amino-acid sequence, 463 residues long: Protoheme IX farnesyltransferase (463 aa).

The unknown stretch occupies residues 1-193 (MAESRTFTGL…AYFRLMKPRL (193 aa)). 4 consecutive transmembrane segments (helical) span residues 6-26 (TFTG…LAGA), 54-74 (LLVA…VVAM), 89-109 (AAII…AIVA), and 115-135 (ALPG…VLAL). Positions 144-170 (GSDDETPVKNPTPAPEPAGDDTPDRTP) are disordered. 9 consecutive transmembrane segments (helical) span residues 193–213 (LMWL…GQTL), 218–238 (VLLT…FNHV), 265–285 (ALAF…QVNA), 286–306 (LVAV…TLVL), 314–334 (TVLG…AADG), 336–356 (VGLP…AHFY), 387–407 (IVYY…LTPL), 409–429 (WLYA…VVLL), and 441–461 (AFHA…VDAL). The interval 194 to 460 (MWLLCLVAAA…AVLIAIVVDA (267 aa)) is protoheme IX prenyltransferase.

It in the C-terminal section; belongs to the UbiA prenyltransferase family. Protoheme IX farnesyltransferase subfamily.

It is found in the cell membrane. The enzyme catalyses heme b + (2E,6E)-farnesyl diphosphate + H2O = Fe(II)-heme o + diphosphate. It participates in porphyrin-containing compound metabolism; heme O biosynthesis; heme O from protoheme: step 1/1. Functionally, converts heme B (protoheme IX) to heme O by substitution of the vinyl group on carbon 2 of heme B porphyrin ring with a hydroxyethyl farnesyl side group. The polypeptide is Protoheme IX farnesyltransferase (ctaB) (Haloarcula marismortui (strain ATCC 43049 / DSM 3752 / JCM 8966 / VKM B-1809) (Halobacterium marismortui)).